A 195-amino-acid polypeptide reads, in one-letter code: MDIKEIALGQIRDSIATKQKCIDSILGDITKAGEMVSKVLQSGNTVYLCGNGGSSCDASHIAAELVVRYKSGNERKALPALSLSGDSAVLTACSNDYGYEEIFARQIEAFGRKGDLLIGLSTSGNSKNVLLALEKAKTRGVKTISLLGGDGGRIKNLSDLDIIVPSKVTARIQESHILIGHILCSIVEYNLFKME.

The region spanning 36-195 (VSKVLQSGNT…IVEYNLFKME (160 aa)) is the SIS domain. 51–53 (NGG) lines the substrate pocket. 2 residues coordinate Zn(2+): H60 and E64. Substrate-binding positions include E64, 95 to 96 (ND), 121 to 123 (STS), S126, and Q173. Zn(2+)-binding residues include Q173 and H181.

It belongs to the SIS family. GmhA subfamily. The cofactor is Zn(2+).

It is found in the cytoplasm. The enzyme catalyses 2 D-sedoheptulose 7-phosphate = D-glycero-alpha-D-manno-heptose 7-phosphate + D-glycero-beta-D-manno-heptose 7-phosphate. Its pathway is carbohydrate biosynthesis; D-glycero-D-manno-heptose 7-phosphate biosynthesis; D-glycero-alpha-D-manno-heptose 7-phosphate and D-glycero-beta-D-manno-heptose 7-phosphate from sedoheptulose 7-phosphate: step 1/1. In terms of biological role, catalyzes the isomerization of sedoheptulose 7-phosphate in D-glycero-D-manno-heptose 7-phosphate. The protein is Phosphoheptose isomerase of Leptospira borgpetersenii serovar Hardjo-bovis (strain JB197).